We begin with the raw amino-acid sequence, 56 residues long: MATTMAKLITLVVLAILAFVEVSVSGYKTSISTITIEDNGRCTKSIPPICFPDGRP.

Residues 1-25 form the signal peptide; the sequence is MATTMAKLITLVVLAILAFVEVSVS. The propeptide occupies 26–39; the sequence is GYKTSISTITIEDN. Residues 40–53 constitute a cross-link (cyclopeptide (Gly-Asp)); the sequence is GRCTKSIPPICFPD. The cysteines at positions 42 and 50 are disulfide-linked. A propeptide spanning residues 54-56 is cleaved from the precursor; the sequence is GRP.

In terms of processing, this is a cyclic peptide.

Its function is as follows. Inhibits trypsin, cathepsin G, elastase, chymotrypsin and thrombin. Does not inhibit factor Xa. The polypeptide is Trypsin inhibitor 1 (Helianthus annuus (Common sunflower)).